The primary structure comprises 62 residues: Flavodoxin (62 aa).

Residues 4–62 enclose the Flavodoxin-like domain; that stretch reads IGIFFGTDTGKTRKIAKMIHKQLGELADAPVNINRTTLDDFMAYPVLLLGTPTLGDGQL.

Belongs to the flavodoxin family. FMN serves as cofactor.

In terms of biological role, low-potential electron donor to a number of redox enzymes. NifF is the electron donor to nitrogenase. This Klebsiella oxytoca protein is Flavodoxin (nifF).